The sequence spans 425 residues: Oxytetracycline polyketide putative beta-ketoacyl synthase 1 (425 aa).

The Ketosynthase family 3 (KS3) domain occupies 7–420; sequence ARRVVITGIG…GFQSAIVLTE (414 aa). Active-site for beta-ketoacyl synthase activity residues include C173, H313, and H350.

The protein belongs to the thiolase-like superfamily. Beta-ketoacyl-ACP synthases family.

It participates in antibiotic biosynthesis; oxytetracycline biosynthesis. The chain is Oxytetracycline polyketide putative beta-ketoacyl synthase 1 from Streptomyces rimosus.